A 475-amino-acid polypeptide reads, in one-letter code: Trifunctional enzyme subunit beta, mitochondrial (475 aa).

The N-terminal 34 residues, 1-34 (MTTILTSTFRNLSTTSKWALRFSVRPLSCSSQVQ), are a transit peptide targeting the mitochondrion. Lys53 is modified (N6-succinyllysine). Lys73 carries the post-translational modification N6-acetyllysine; alternate. Lys73 bears the N6-succinyllysine; alternate mark. Residue Cys139 is the Acyl-thioester intermediate of the active site. An intramembrane segment occupies 174–221 (IRHSRNMRKMMLDLNKAKTLAQRLSLLTKFRLNFLSPELPAVAEFSTN). Lys189 is subject to N6-acetyllysine; alternate. Lys189 bears the N6-succinyllysine; alternate mark. Residues Lys191, Lys273, and Lys292 each carry the N6-succinyllysine modification. Lys294 is modified (N6-acetyllysine; alternate). The residue at position 294 (Lys294) is an N6-succinyllysine; alternate. N6-acetyllysine is present on Lys299. An N6-acetyllysine; alternate modification is found at Lys333. Lys333 is modified (N6-succinyllysine; alternate). 2 positions are modified to N6-acetyllysine: Lys349 and Lys362. Catalysis depends on Cys459, which acts as the Proton donor/acceptor.

This sequence belongs to the thiolase-like superfamily. Thiolase family. In terms of assembly, heterotetramer of 2 alpha/HADHA and 2 beta/HADHB subunits; forms the mitochondrial trifunctional enzyme. Also purified as higher order heterooligomers including a 4 alpha/HADHA and 4 beta/HADHB heterooligomer which physiological significance remains unclear. The mitochondrial trifunctional enzyme interacts with MTLN. Interacts with RSAD2/viperin.

The protein localises to the mitochondrion. It is found in the mitochondrion inner membrane. It localises to the mitochondrion outer membrane. Its subcellular location is the endoplasmic reticulum. It catalyses the reaction an acyl-CoA + acetyl-CoA = a 3-oxoacyl-CoA + CoA. It carries out the reaction butanoyl-CoA + acetyl-CoA = 3-oxohexanoyl-CoA + CoA. The catalysed reaction is hexanoyl-CoA + acetyl-CoA = 3-oxooctanoyl-CoA + CoA. The enzyme catalyses octanoyl-CoA + acetyl-CoA = 3-oxodecanoyl-CoA + CoA. It catalyses the reaction decanoyl-CoA + acetyl-CoA = 3-oxododecanoyl-CoA + CoA. It carries out the reaction dodecanoyl-CoA + acetyl-CoA = 3-oxotetradecanoyl-CoA + CoA. The catalysed reaction is tetradecanoyl-CoA + acetyl-CoA = 3-oxohexadecanoyl-CoA + CoA. The protein operates within lipid metabolism; fatty acid beta-oxidation. Its function is as follows. Mitochondrial trifunctional enzyme catalyzes the last three of the four reactions of the mitochondrial beta-oxidation pathway. The mitochondrial beta-oxidation pathway is the major energy-producing process in tissues and is performed through four consecutive reactions breaking down fatty acids into acetyl-CoA. Among the enzymes involved in this pathway, the trifunctional enzyme exhibits specificity for long-chain fatty acids. Mitochondrial trifunctional enzyme is a heterotetrameric complex composed of two proteins, the trifunctional enzyme subunit alpha/HADHA carries the 2,3-enoyl-CoA hydratase and the 3-hydroxyacyl-CoA dehydrogenase activities, while the trifunctional enzyme subunit beta/HADHB described here bears the 3-ketoacyl-CoA thiolase activity. The polypeptide is Trifunctional enzyme subunit beta, mitochondrial (Hadhb) (Rattus norvegicus (Rat)).